The chain runs to 127 residues: Large ribosomal subunit protein uL18 (127 aa).

The protein belongs to the universal ribosomal protein uL18 family. As to quaternary structure, part of the 50S ribosomal subunit; part of the 5S rRNA/L5/L18/L25 subcomplex. Contacts the 5S and 23S rRNAs.

This is one of the proteins that bind and probably mediate the attachment of the 5S RNA into the large ribosomal subunit, where it forms part of the central protuberance. The polypeptide is Large ribosomal subunit protein uL18 (Streptomyces coelicolor (strain ATCC BAA-471 / A3(2) / M145)).